We begin with the raw amino-acid sequence, 45 residues long: Cytochrome b559 subunit beta (45 aa).

A helical membrane pass occupies residues Trp-20–Ala-36. Position 24 (His-24) interacts with heme.

This sequence belongs to the PsbE/PsbF family. As to quaternary structure, heterodimer of an alpha subunit and a beta subunit. PSII is composed of 1 copy each of membrane proteins PsbA, PsbB, PsbC, PsbD, PsbE, PsbF, PsbH, PsbI, PsbJ, PsbK, PsbL, PsbM, PsbT, PsbX, PsbY, PsbZ, Psb30/Ycf12, peripheral proteins PsbO, CyanoQ (PsbQ), PsbU, PsbV and a large number of cofactors. It forms dimeric complexes. It depends on heme b as a cofactor.

The protein localises to the cellular thylakoid membrane. In terms of biological role, this b-type cytochrome is tightly associated with the reaction center of photosystem II (PSII). PSII is a light-driven water:plastoquinone oxidoreductase that uses light energy to abstract electrons from H(2)O, generating O(2) and a proton gradient subsequently used for ATP formation. It consists of a core antenna complex that captures photons, and an electron transfer chain that converts photonic excitation into a charge separation. The chain is Cytochrome b559 subunit beta from Parasynechococcus marenigrum (strain WH8102).